We begin with the raw amino-acid sequence, 141 residues long: UPF0310 protein SSA_0254 (141 aa).

This sequence belongs to the UPF0310 family.

The protein is UPF0310 protein SSA_0254 of Streptococcus sanguinis (strain SK36).